Consider the following 1187-residue polypeptide: Trafficking protein particle complex II-specific subunit 120 homolog (1187 aa).

Residues 1037–1059 are disordered; the sequence is GTTAKTDSSKEPGDGSSRSADES.

This sequence belongs to the TRS120 family. As to quaternary structure, part of the multisubunit TRAPP (transport protein particle) II complex composed of BET3, BET5, TRS20, TRS23, TRS31, TRS33, TRS65, TRS85, TRS120 and TRS130.

It localises to the golgi apparatus. The protein localises to the trans-Golgi network. The protein resides in the early endosome. In terms of biological role, specific subunit of the TRAPP II complex, a highly conserved vesicle tethering complex that is required for the proper transport of proteins in post-Golgi trafficking pathways to the growing cell plate in mitotic active cells. The protein is Trafficking protein particle complex II-specific subunit 120 homolog of Oryza sativa subsp. japonica (Rice).